A 530-amino-acid polypeptide reads, in one-letter code: MQSPATKGTLALAVLAVSLIMAGCASMGDNKPQSARIEANALDAGAAIRAADRDAGWPAADWWRAYRDPQLDTWIAAAQAGXPDARGRRGRVREAQAMARVARSAELPQINGNLSLMRQHWPDNVYYGPGPLANTDTWNNTGTLGLSYHLDLWGKDKNATERALDTAHATAADARAAKLELEVNVVRAYVGMSMNYALLDLAHETFERQRSLADLARKRLQAGLGTQLEVSQAESTLPDYERQIDSYEEAIQLARHQLAALAGKGPGAGDAIKRPRLSLDAPAGLPSAMPADLLGRRPDVVAARWTVDAQARGIDVAKASFYPNIDLLATVGGFGVTAPFTDFLRAMNGGWTAGPALSLPIFEGGRLRAQLGAANAGVRPGGRAIQPDDRRRAQGHRRPGRADPFARYAEEGRRTLGGRQRPQLPAVARRLPPRPDRLRQRAGRAAAIVGAHRKRPPHRSERLAAHAQLMAALGGGVETGTDVPGSQSSHGESAAGAAAPAAASGAKPVAAAARPAQVAAAGAAGVPAAR.

A signal peptide spans 1–23 (MQSPATKGTLALAVLAVSLIMAG). C24 is lipidated: N-palmitoyl cysteine. C24 carries the S-diacylglycerol cysteine lipid modification. Disordered regions lie at residues 375–442 (NAGV…RQRA) and 476–530 (GVET…PAAR). 2 stretches are compositionally biased toward low complexity: residues 421–430 (RPQLPAVARR) and 494–530 (AAGAAAPAAASGAKPVAAAARPAQVAAAGAAGVPAAR).

It belongs to the outer membrane factor (OMF) (TC 1.B.17) family.

It localises to the cell membrane. In terms of biological role, involved in the resistance (detoxification) of the fungal toxin fusaric acid. The chain is Fusaric acid resistance protein FusA (fusA) from Burkholderia cepacia (Pseudomonas cepacia).